The following is a 296-amino-acid chain: Cell division protein DivIB (296 aa).

Topologically, residues 1–29 (MTKEIPKINNEYLKEKRKKQRIQQRRVQR) are cytoplasmic. Residues 30 to 50 (MIVGILVVIVLLILVYMFTPI) traverse the membrane as a helical segment. Residues 51–119 (SHIKSADIKG…NPIEVNVKEH (69 aa)) enclose the POTRA domain. Topologically, residues 51-296 (SHIKSADIKG…NKIKDEESSE (246 aa)) are extracellular. A compositionally biased stretch (polar residues) spans 256 to 273 (NNGQTSSASAKEVQSGTA). Residues 256 to 296 (NNGQTSSASAKEVQSGTASEDKAKDDLQKALNKIKDEESSE) are disordered. Positions 274–296 (SEDKAKDDLQKALNKIKDEESSE) are enriched in basic and acidic residues.

This sequence belongs to the FtsQ/DivIB family. DivIB subfamily.

Its subcellular location is the cell membrane. Cell division protein that may be involved in stabilizing or promoting the assembly of the division complex. The polypeptide is Cell division protein DivIB (Staphylococcus pseudintermedius (strain HKU10-03)).